A 389-amino-acid polypeptide reads, in one-letter code: Na(+)/H(+) antiporter NhaA (389 aa).

10 helical membrane-spanning segments follow: residues 8–28 (INFLQEFSIPLILGVLIALVW), 48–68 (ISLHFFVNDIFMVFFFAMAAI), 91–111 (MATLGGVLGPALVFLGLNALI), 119–139 (GWGIPTATDIALAWLVARVVF), 173–193 (NPVAPLWLLLTVAGMLVAYLL), 214–234 (AGLYLAHIHPALALVFIVPFL), 262–282 (WKIFVDFGLLLFGLTNAGVEF), 288–308 (LTWLVLIALVGGKTIGIFLMG), 327–347 (LLVAGVIAAMGLTVALFVSGV), and 361–381 (GALFSAVAAVIAFALGKVLGI).

This sequence belongs to the NhaA Na(+)/H(+) (TC 2.A.33) antiporter family.

The protein resides in the cell membrane. The enzyme catalyses Na(+)(in) + 2 H(+)(out) = Na(+)(out) + 2 H(+)(in). Functionally, na(+)/H(+) antiporter that extrudes sodium in exchange for external protons. In Desulfitobacterium hafniense (strain DSM 10664 / DCB-2), this protein is Na(+)/H(+) antiporter NhaA.